Here is a 269-residue protein sequence, read N- to C-terminus: Tryptophan synthase alpha chain (269 aa).

Catalysis depends on proton acceptor residues Glu-49 and Asp-60.

The protein belongs to the TrpA family. As to quaternary structure, tetramer of two alpha and two beta chains.

It catalyses the reaction (1S,2R)-1-C-(indol-3-yl)glycerol 3-phosphate + L-serine = D-glyceraldehyde 3-phosphate + L-tryptophan + H2O. Its pathway is amino-acid biosynthesis; L-tryptophan biosynthesis; L-tryptophan from chorismate: step 5/5. In terms of biological role, the alpha subunit is responsible for the aldol cleavage of indoleglycerol phosphate to indole and glyceraldehyde 3-phosphate. The protein is Tryptophan synthase alpha chain of Pseudomonas putida (strain ATCC 47054 / DSM 6125 / CFBP 8728 / NCIMB 11950 / KT2440).